The following is a 59-amino-acid chain: Metallothionein-1B (59 aa).

A beta region spans residues 1-29; the sequence is MPGPCCNDKCVCQEGGCKAGCQCTSCRCS. 17 residues coordinate a divalent metal cation: C5, C6, C10, C17, C21, C23, C26, C28, C31, C34, C38, C40, C46, C50, C54, C56, and C57. Positions 30-59 are alpha; sequence PCQKCTSGCKCATKEECSKTCTKPCSCCPK.

The protein belongs to the metallothionein superfamily. Type 3 family.

In terms of biological role, binds six divalent metal ions. Known to bind copper and cadmium. This chain is Metallothionein-1B, found in Callinectes sapidus (Blue crab).